The sequence spans 597 residues: FERM domain-containing protein 3 (597 aa).

The FERM domain maps to 32-312 (MRCTIRLLDD…ENQAFYKYAK (281 aa)). The tract at residues 409–435 (SAPLISSSPVKAAQEYEDPPSEEEDKI) is disordered. Acidic residues predominate over residues 423-432 (EYEDPPSEEE). A helical transmembrane segment spans residues 531–551 (LLVVGLGLLLFVFPLLLLLLE).

It is found in the membrane. Putative tumor suppressor gene that may be implicated in the origin and progression of lung cancer. This Pongo abelii (Sumatran orangutan) protein is FERM domain-containing protein 3 (FRMD3).